Reading from the N-terminus, the 227-residue chain is Staphylococcal superantigen-like 10 (227 aa).

An N-terminal signal peptide occupies residues Met1 to Ala30.

Belongs to the staphylococcal/streptococcal toxin family. As to quaternary structure, interacts with prothrombin/F2 and coagulation factor X/F12. Interacts with human CXCR4.

It localises to the secreted. Functionally, plays a role in the inhibition of host complement activation via the classical pathway by interacting with the Fc region of human IgG and thereby interfering with the IgG/C1q interaction. Also inhibits the penultimate step of plasma clotting by interacting with prothrombin/F2 and coagulation factor X/F12. Does not affect the protease activity of thrombin but interferes with the conversion of prothrombin to thrombin. Interacts with human receptor CXCR4 and specifically inhibits CXCL12-induced calcium mobilization and cell migration. This chain is Staphylococcal superantigen-like 10, found in Staphylococcus aureus (strain NCTC 8325 / PS 47).